Reading from the N-terminus, the 361-residue chain is Peptide chain release factor 1 (361 aa).

At glutamine 235 the chain carries N5-methylglutamine.

Belongs to the prokaryotic/mitochondrial release factor family. Post-translationally, methylated by PrmC. Methylation increases the termination efficiency of RF1.

The protein resides in the cytoplasm. In terms of biological role, peptide chain release factor 1 directs the termination of translation in response to the peptide chain termination codons UAG and UAA. This chain is Peptide chain release factor 1, found in Rhodopseudomonas palustris (strain BisB18).